The following is a 102-amino-acid chain: Large ribosomal subunit protein uL24 (102 aa).

The protein belongs to the universal ribosomal protein uL24 family. In terms of assembly, part of the 50S ribosomal subunit.

One of two assembly initiator proteins, it binds directly to the 5'-end of the 23S rRNA, where it nucleates assembly of the 50S subunit. Functionally, one of the proteins that surrounds the polypeptide exit tunnel on the outside of the subunit. The polypeptide is Large ribosomal subunit protein uL24 (Finegoldia magna (strain ATCC 29328 / DSM 20472 / WAL 2508) (Peptostreptococcus magnus)).